Here is a 333-residue protein sequence, read N- to C-terminus: Probable malate dehydrogenase 3 (333 aa).

12–18 (GAAGQIA) provides a ligand contact to NAD(+). R93 and R99 together coordinate substrate. NAD(+)-binding positions include N106, Q113, and 130 to 132 (VGN). Substrate-binding residues include N132 and R163. H188 functions as the Proton acceptor in the catalytic mechanism.

The protein belongs to the LDH/MDH superfamily. MDH type 2 family. In terms of assembly, homodimer.

The catalysed reaction is (S)-malate + NAD(+) = oxaloacetate + NADH + H(+). Catalyzes the reversible oxidation of malate to oxaloacetate. In Dictyostelium discoideum (Social amoeba), this protein is Probable malate dehydrogenase 3 (mdhC).